Consider the following 197-residue polypeptide: ATP synthase subunit delta', mitochondrial (197 aa).

The transit peptide at Met1 to Phe19 directs the protein to the mitochondrion.

The protein belongs to the ATPase epsilon chain family. F-type ATPases have 2 components, CF(1) - the catalytic core - and CF(0) - the membrane proton channel. CF(1) has five subunits: alpha(3), beta(3), gamma(1), delta(1), epsilon(1). CF(0) has three main subunits: a, b and c.

Its subcellular location is the mitochondrion. The protein localises to the mitochondrion inner membrane. In terms of biological role, mitochondrial membrane ATP synthase (F(1)F(0) ATP synthase or Complex V) produces ATP from ADP in the presence of a proton gradient across the membrane which is generated by electron transport complexes of the respiratory chain. F-type ATPases consist of two structural domains, F(1) - containing the extramembraneous catalytic core, and F(0) - containing the membrane proton channel, linked together by a central stalk and a peripheral stalk. During catalysis, ATP turnover in the catalytic domain of F(1) is coupled via a rotary mechanism of the central stalk subunits to proton translocation. Part of the complex F(1) domain and of the central stalk which is part of the complex rotary element. Rotation of the central stalk against the surrounding alpha(3)beta(3) subunits leads to hydrolysis of ATP in three separate catalytic sites on the beta subunits. In Pisum sativum (Garden pea), this protein is ATP synthase subunit delta', mitochondrial.